The sequence spans 232 residues: Peptidyl-prolyl cis-trans isomerase CYP26-1 (232 aa).

The region spanning 7 to 166 (FFDLTVDGKP…KPVVIADCGE (160 aa)) is the PPIase cyclophilin-type domain. Residue Asn108 is glycosylated (N-linked (GlcNAc...) asparagine). The chain crosses the membrane as a helical span at residues 212–232 (YYLINIVVACMVLMCFWSWFV).

Belongs to the cyclophilin-type PPIase family. In terms of tissue distribution, expressed only in flowers.

Its subcellular location is the membrane. The catalysed reaction is [protein]-peptidylproline (omega=180) = [protein]-peptidylproline (omega=0). PPIases accelerate the folding of proteins. It catalyzes the cis-trans isomerization of proline imidic peptide bonds in oligopeptides. In Arabidopsis thaliana (Mouse-ear cress), this protein is Peptidyl-prolyl cis-trans isomerase CYP26-1 (CYP26-1).